The following is a 125-amino-acid chain: Large-conductance mechanosensitive channel (125 aa).

Helical transmembrane passes span 14 to 34 (VIDL…VQSL) and 67 to 87 (GSFL…FLIV).

It belongs to the MscL family. In terms of assembly, homopentamer.

The protein localises to the cell membrane. Its function is as follows. Channel that opens in response to stretch forces in the membrane lipid bilayer. May participate in the regulation of osmotic pressure changes within the cell. This chain is Large-conductance mechanosensitive channel, found in Lactobacillus helveticus (strain DPC 4571).